The following is a 311-amino-acid chain: Ribonuclease Z (311 aa).

Zn(2+) is bound by residues His63, His65, Asp67, His68, His141, Asp212, and His270. Asp67 (proton acceptor) is an active-site residue.

Belongs to the RNase Z family. Homodimer. The cofactor is Zn(2+).

The catalysed reaction is Endonucleolytic cleavage of RNA, removing extra 3' nucleotides from tRNA precursor, generating 3' termini of tRNAs. A 3'-hydroxy group is left at the tRNA terminus and a 5'-phosphoryl group is left at the trailer molecule.. Zinc phosphodiesterase, which displays some tRNA 3'-processing endonuclease activity. Probably involved in tRNA maturation, by removing a 3'-trailer from precursor tRNA. This is Ribonuclease Z from Lactiplantibacillus plantarum (strain ATCC BAA-793 / NCIMB 8826 / WCFS1) (Lactobacillus plantarum).